We begin with the raw amino-acid sequence, 416 residues long: Thioredoxin domain-containing protein 5 homolog (416 aa).

The signal sequence occupies residues 1–25 (MLTRSILSVAVCGLLLSPLLPITRA). Thioredoxin domains are found at residues 26–145 (SQEE…KELS), 150–272 (ADLG…KMVG), and 293–412 (AGEE…KFLG). 3 disulfide bridges follow: Cys-65–Cys-68, Cys-194–Cys-197, and Cys-331–Cys-334. A Prevents secretion from ER motif is present at residues 413–416 (HDEL).

This sequence belongs to the protein disulfide isomerase family.

It localises to the endoplasmic reticulum. It is found in the cell surface. Possesses thioredoxin activity. Acts as a ligand for Drpr and is required for the phagocytosis of apoptotic cells. Binds to the extracellular region of Drpr and augments Drpr tyrosine phosphorylation. This chain is Thioredoxin domain-containing protein 5 homolog, found in Drosophila melanogaster (Fruit fly).